We begin with the raw amino-acid sequence, 180 residues long: Large ribosomal subunit protein uL6 (180 aa).

This sequence belongs to the universal ribosomal protein uL6 family. As to quaternary structure, part of the 50S ribosomal subunit.

Functionally, this protein binds to the 23S rRNA, and is important in its secondary structure. It is located near the subunit interface in the base of the L7/L12 stalk, and near the tRNA binding site of the peptidyltransferase center. The chain is Large ribosomal subunit protein uL6 from Clostridioides difficile (strain 630) (Peptoclostridium difficile).